A 498-amino-acid polypeptide reads, in one-letter code: Glycerol kinase (498 aa).

ADP is bound at residue threonine 11. Positions 11, 12, and 13 each coordinate ATP. Threonine 11 is a binding site for sn-glycerol 3-phosphate. Arginine 15 serves as a coordination point for ADP. Sn-glycerol 3-phosphate-binding residues include arginine 81, glutamate 82, tyrosine 133, and aspartate 242. Glycerol is bound by residues arginine 81, glutamate 82, tyrosine 133, aspartate 242, and glutamine 243. The ADP site is built by threonine 264 and glycine 307. ATP contacts are provided by threonine 264, glycine 307, glutamine 311, and glycine 412. 2 residues coordinate ADP: glycine 412 and asparagine 416.

Belongs to the FGGY kinase family.

The enzyme catalyses glycerol + ATP = sn-glycerol 3-phosphate + ADP + H(+). It functions in the pathway polyol metabolism; glycerol degradation via glycerol kinase pathway; sn-glycerol 3-phosphate from glycerol: step 1/1. Inhibited by fructose 1,6-bisphosphate (FBP). Key enzyme in the regulation of glycerol uptake and metabolism. Catalyzes the phosphorylation of glycerol to yield sn-glycerol 3-phosphate. This chain is Glycerol kinase, found in Delftia acidovorans (strain DSM 14801 / SPH-1).